A 334-amino-acid polypeptide reads, in one-letter code: D-fructose 1,6-bisphosphatase class 2/sedoheptulose 1,7-bisphosphatase (334 aa).

4 residues coordinate Mn(2+): D33, E57, D85, and E88. Substrate is bound by residues 88 to 90, Y119, 164 to 166, and 186 to 188; these read EGT, RAR, and DGD. E213 contributes to the Mn(2+) binding site.

Belongs to the FBPase class 2 family. As to quaternary structure, homotetramer. It depends on Mn(2+) as a cofactor.

It catalyses the reaction beta-D-fructose 1,6-bisphosphate + H2O = beta-D-fructose 6-phosphate + phosphate. It carries out the reaction D-sedoheptulose 1,7-bisphosphate + H2O = D-sedoheptulose 7-phosphate + phosphate. Its pathway is carbohydrate biosynthesis; Calvin cycle. Functionally, catalyzes the hydrolysis of fructose 1,6-bisphosphate (Fru 1,6-P2) and sedoheptulose 1,7-bisphosphate (Sed 1,7-P2) to fructose 6-phosphate and sedoheptulose 7-phosphate, respectively. The protein is D-fructose 1,6-bisphosphatase class 2/sedoheptulose 1,7-bisphosphatase of Prochlorococcus marinus (strain MIT 9303).